A 569-amino-acid polypeptide reads, in one-letter code: CTP synthase (569 aa).

Positions 1–272 (MARPKNVKHI…DSRVLKKLGI (272 aa)) are amidoligase domain. Ser18 lines the CTP pocket. Residue Ser18 participates in UTP binding. 19–24 (SLGKGI) is a binding site for ATP. L-glutamine is bound at residue Tyr59. Asp76 lines the ATP pocket. Residues Asp76 and Glu146 each contribute to the Mg(2+) site. CTP-binding positions include 153 to 155 (DIE), 193 to 198 (KTKPTQ), and Lys229. Residues 193 to 198 (KTKPTQ) and Lys229 contribute to the UTP site. The region spanning 299–543 (TIGICGKYTE…VAAAKDYARG (245 aa)) is the Glutamine amidotransferase type-1 domain. Residue Gly363 participates in L-glutamine binding. Catalysis depends on Cys390, which acts as the Nucleophile; for glutamine hydrolysis. L-glutamine-binding positions include 391-394 (LGMQ), Glu414, and Arg471. Catalysis depends on residues His516 and Glu518.

This sequence belongs to the CTP synthase family. As to quaternary structure, homotetramer.

It catalyses the reaction UTP + L-glutamine + ATP + H2O = CTP + L-glutamate + ADP + phosphate + 2 H(+). It carries out the reaction L-glutamine + H2O = L-glutamate + NH4(+). The enzyme catalyses UTP + NH4(+) + ATP = CTP + ADP + phosphate + 2 H(+). It functions in the pathway pyrimidine metabolism; CTP biosynthesis via de novo pathway; CTP from UDP: step 2/2. Allosterically activated by GTP, when glutamine is the substrate; GTP has no effect on the reaction when ammonia is the substrate. The allosteric effector GTP functions by stabilizing the protein conformation that binds the tetrahedral intermediate(s) formed during glutamine hydrolysis. Inhibited by the product CTP, via allosteric rather than competitive inhibition. Catalyzes the ATP-dependent amination of UTP to CTP with either L-glutamine or ammonia as the source of nitrogen. Regulates intracellular CTP levels through interactions with the four ribonucleotide triphosphates. In Chlorobium chlorochromatii (strain CaD3), this protein is CTP synthase.